The primary structure comprises 146 residues: Large ribosomal subunit protein uL16 (146 aa).

It belongs to the universal ribosomal protein uL16 family. As to quaternary structure, part of the 50S ribosomal subunit.

In terms of biological role, binds 23S rRNA and is also seen to make contacts with the A and possibly P site tRNAs. This chain is Large ribosomal subunit protein uL16, found in Thermomicrobium roseum (strain ATCC 27502 / DSM 5159 / P-2).